The sequence spans 440 residues: Xaa-Pro dipeptidase (440 aa).

Aspartate 244, aspartate 255, histidine 335, glutamate 380, and glutamate 419 together coordinate Mn(2+).

The protein belongs to the peptidase M24B family. Bacterial-type prolidase subfamily. Mn(2+) serves as cofactor.

The catalysed reaction is Xaa-L-Pro dipeptide + H2O = an L-alpha-amino acid + L-proline. Functionally, splits dipeptides with a prolyl residue in the C-terminal position. The protein is Xaa-Pro dipeptidase of Shewanella loihica (strain ATCC BAA-1088 / PV-4).